The primary structure comprises 488 residues: PTS system mannitol-specific EIICB component (488 aa).

The Cytoplasmic segment spans residues 1-26; it reads MRKKLAKVKVHIQSLDSLLSSMTMPI. Residues 15 to 362 form the PTS EIIC type-2 domain; sequence LDSLLSSMTM…LSLTRKKQLK (348 aa). A helical transmembrane segment spans residues 27-48; that stretch reads IGIFIAWGLLASFFIPSGWTPD. Topologically, residues 49 to 52 are extracellular; it reads KNLA. Residues 53–73 traverse the membrane as a helical segment; sequence LMVGIGIQYVIPTIIXFFGGK. Topologically, residues 74–147 are cytoplasmic; that stretch reads KIYEIRGGVI…SGFEMLVNNF (74 aa). The helical transmembrane segment at 148–169 threads the bilayer; it reads YLGFLGFALIFPSFYLSIYLIG. Over 170–178 the chain is Extracellular; that stretch reads YIQLGLKLL. Residues 179 to 199 form a helical membrane-spanning segment; it reads VEIMQQYKLYPIAAIVIEPAK. Topologically, residues 200-289 are cytoplasmic; it reads VLFLNNAINH…VLLKPVLILA (90 aa). A helical transmembrane segment spans residues 290–309; sequence TIAVGVVGNGILQIFNAGTI. At 310 to 331 the chain is on the extracellular side; the sequence is APVSPGSVIAGFLQINKTPLDV. The chain crosses the membrane as a helical span at residues 332–353; the sequence is AGYALALVLSAVTSLLISLLLL. Topologically, residues 354-488 are cytoplasmic; sequence SLTRKKQLKT…IIEKIKNEKN (135 aa). A PTS EIIB type-2 domain is found at 397–488; sequence SQVTFVCDAG…IIEKIKNEKN (92 aa). The Phosphocysteine intermediate; for EIIB activity role is filled by Cys403. A Phosphocysteine; by EIIA modification is found at Cys403.

In terms of assembly, homodimer.

The protein localises to the cell membrane. The catalysed reaction is D-mannitol(out) + N(pros)-phospho-L-histidyl-[protein] = D-mannitol 1-phosphate(in) + L-histidyl-[protein]. Its function is as follows. The phosphoenolpyruvate-dependent sugar phosphotransferase system (sugar PTS), a major carbohydrate active transport system, catalyzes the phosphorylation of incoming sugar substrates concomitantly with their translocation across the cell membrane. The enzyme II CmtAB PTS system is involved in D-mannitol transport. The polypeptide is PTS system mannitol-specific EIICB component (mtlA) (Mycoplasma pneumoniae (strain ATCC 29342 / M129 / Subtype 1) (Mycoplasmoides pneumoniae)).